Consider the following 363-residue polypeptide: Des-methyl DIF-1 methyltransferase A (363 aa).

S-adenosyl-L-methionine-binding residues include G195, D221, D250, L251, and K266. H270 (proton acceptor) is an active-site residue.

Belongs to the class I-like SAM-binding methyltransferase superfamily. Cation-independent O-methyltransferase family. COMT subfamily.

It carries out the reaction (3,5-dichloro-2,4,6-trihydroxyphenyl)hexan-1-one + S-adenosyl-L-methionine = 1-(3,5-dichloro-2,6-dihydroxy-4-methoxyphenyl)hexan-1-one + S-adenosyl-L-homocysteine + H(+). O-methyltransferase; part of the gene cluster that mediates the biosynthesis of DIF-1 (Differentiation Inducing Factor-1), a signal molecule involved in the differentiation of pstO (prestalk-O) cells. The three-step process begins with the formation of (2,4,6-trihydroxyphenyl)-1-hexan-1-one (THPH) by the polyketide synthase StlB. THPH is then dichlorinated by the flavin-dependent halogenase ChlA. The last step of DIF-1 biosynthesis is the O-methylation of dichloro-THPH (or des-methyl-DIF-1) by the methyltransferase DmtA to yield DIF-1. This chain is Des-methyl DIF-1 methyltransferase A, found in Dictyostelium discoideum (Social amoeba).